The following is a 202-amino-acid chain: Histone chaperone ASF1B (202 aa).

Residues 1–155 (MAKVSVLNVA…VTRFHINWDN (155 aa)) form an interaction with CHAF1B region. The interaction with histone H3 stretch occupies residues 1 to 156 (MAKVSVLNVA…TRFHINWDNN (156 aa)). Residue serine 198 is modified to Phosphoserine; by TLK2.

It belongs to the ASF1 family. As to quaternary structure, interacts with histone H3 (via C-terminus), including histone H3.1, H3.2 and H3.3, and histone H4; the interaction with H3 is direct. Interacts with the CHAF1A, CHAF1B and RBBP4 subunits of the CAF-1 complex. Interacts with HAT1, NASP and TAF1. Found in a soluble complex with NASP and histones H3 and H4; the interaction with NASP is probably indirect and mediated by H3-H4. Interacts with CDAN1. Found in a cytosolic complex with IPO4 and histones H3 and H4. Interacts with CREBBP. Phosphorylated by TLK1 and TLK2. As to expression, highly expressed in testis and at lower levels in colon, small intestine and thymus.

Its subcellular location is the nucleus. The protein resides in the cytoplasm. It is found in the cytosol. Functionally, histone chaperone that facilitates histone deposition and histone exchange and removal during nucleosome assembly and disassembly. Cooperates with chromatin assembly factor 1 (CAF-1) to promote replication-dependent chromatin assembly. Also involved in the nuclear import of the histone H3-H4 dimer together with importin-4 (IPO4): specifically recognizes and binds newly synthesized histones with the monomethylation of H3 'Lys-9' (H3K9me1) and diacetylation at 'Lys-5' and 'Lys-12' of H4 (H4K5K12ac) marks in the cytosol. Does not participate in replication-independent nucleosome deposition which is mediated by ASF1A and HIRA. Required for gonad development. The protein is Histone chaperone ASF1B of Homo sapiens (Human).